Reading from the N-terminus, the 371-residue chain is Protein lifeguard 1 (371 aa).

The interval 1 to 145 (MSHEKSFLVS…EGPPSYYDNQ (145 aa)) is disordered. A compositionally biased stretch (pro residues) spans 14–49 (YPPPNPGYPGGPQPPMPPYAQPPYPGAPYPQPPFQP). Low complexity predominate over residues 84–98 (YPQEGYPQGPYPQGG). Positions 102–114 (GPYPQSPFPPNPY) are enriched in pro residues. The next 7 membrane-spanning stretches (helical) occupy residues 165-185 (VFLV…VFTF), 197-217 (VWTY…LSCC), 228-248 (LVAL…IASF), 253-273 (AVIM…IFSM), 283-303 (MGVL…CIFI), 307-327 (ILEI…LAVD), and 346-366 (FAAL…LTII).

Belongs to the BI1 family. LFG subfamily.

The protein localises to the membrane. In terms of biological role, potential apoptotic regulator. This is Protein lifeguard 1 (GRINA) from Homo sapiens (Human).